The primary structure comprises 137 residues: Large ribosomal subunit protein bL17 (137 aa).

It belongs to the bacterial ribosomal protein bL17 family. In terms of assembly, part of the 50S ribosomal subunit. Contacts protein L32.

This Caulobacter sp. (strain K31) protein is Large ribosomal subunit protein bL17.